The primary structure comprises 364 residues: Aminomethyltransferase (364 aa).

This sequence belongs to the GcvT family. The glycine cleavage system is composed of four proteins: P, T, L and H.

The enzyme catalyses N(6)-[(R)-S(8)-aminomethyldihydrolipoyl]-L-lysyl-[protein] + (6S)-5,6,7,8-tetrahydrofolate = N(6)-[(R)-dihydrolipoyl]-L-lysyl-[protein] + (6R)-5,10-methylene-5,6,7,8-tetrahydrofolate + NH4(+). The glycine cleavage system catalyzes the degradation of glycine. The protein is Aminomethyltransferase of Klebsiella pneumoniae subsp. pneumoniae (strain ATCC 700721 / MGH 78578).